We begin with the raw amino-acid sequence, 275 residues long: Membrane protein insertase YidC (275 aa).

Positions 1-22 (MKKYKRLLLMAGLVTLVFVLSA) are cleaved as a signal peptide. Cysteine 23 carries N-palmitoyl cysteine lipidation. A lipid anchor (S-diacylglycerol cysteine) is attached at cysteine 23. A run of 4 helical transmembrane segments spans residues 53-73 (LGGS…IILL), 127-147 (YIGC…YQAI), 169-189 (YLIL…LSSM), and 206-226 (PAMI…YWVV). Residues 249–266 (EEAARQAKARERALERAK) show a composition bias toward basic and acidic residues. The disordered stretch occupies residues 249-275 (EEAARQAKARERALERAKSPKKKGKKK).

It belongs to the OXA1/ALB3/YidC family. Type 2 subfamily.

The protein localises to the cell membrane. Its function is as follows. Required for the insertion and/or proper folding and/or complex formation of integral membrane proteins into the membrane. Involved in integration of membrane proteins that insert both dependently and independently of the Sec translocase complex, as well as at least some lipoproteins. The protein is Membrane protein insertase YidC of Enterococcus faecalis (strain ATCC 700802 / V583).